Here is a 191-residue protein sequence, read N- to C-terminus: Probable nicotinate-nucleotide adenylyltransferase (191 aa).

The protein belongs to the NadD family.

It carries out the reaction nicotinate beta-D-ribonucleotide + ATP + H(+) = deamido-NAD(+) + diphosphate. It participates in cofactor biosynthesis; NAD(+) biosynthesis; deamido-NAD(+) from nicotinate D-ribonucleotide: step 1/1. In terms of biological role, catalyzes the reversible adenylation of nicotinate mononucleotide (NaMN) to nicotinic acid adenine dinucleotide (NaAD). This is Probable nicotinate-nucleotide adenylyltransferase from Oceanobacillus iheyensis (strain DSM 14371 / CIP 107618 / JCM 11309 / KCTC 3954 / HTE831).